A 628-amino-acid chain; its full sequence is Probable potassium transport system protein Kup (628 aa).

Transmembrane regions (helical) follow at residues 15–35, 49–69, 106–126, 141–161, 174–194, 210–230, 254–274, 295–315, 343–363, 369–389, 398–418, and 425–445; these read FAAE…SPLY, FLGG…ILSV, WYLL…GVLT, ISPE…LAVF, FFGP…VYGI, IMLM…CFLA, LFVA…ILLV, LLFL…TGVF, IYVG…VLGF, LASA…ILFI, WPAP…FAFA, and IHDG…VMVS.

This sequence belongs to the HAK/KUP transporter (TC 2.A.72) family.

It localises to the cell inner membrane. The enzyme catalyses K(+)(in) + H(+)(in) = K(+)(out) + H(+)(out). Transport of potassium into the cell. Likely operates as a K(+):H(+) symporter. The polypeptide is Probable potassium transport system protein Kup (Xanthobacter autotrophicus (strain ATCC BAA-1158 / Py2)).